The sequence spans 304 residues: Acetaldehyde dehydrogenase (304 aa).

Residue Cys-131 is the Acyl-thioester intermediate of the active site. NAD(+) contacts are provided by residues 162–170 and Asn-273; that span reads SAGPGTRKN.

Belongs to the acetaldehyde dehydrogenase family.

It carries out the reaction acetaldehyde + NAD(+) + CoA = acetyl-CoA + NADH + H(+). The polypeptide is Acetaldehyde dehydrogenase (Polaromonas naphthalenivorans (strain CJ2)).